Consider the following 632-residue polypeptide: Actin-related protein 8 (632 aa).

Residues 1 to 30 (MTQAEREQENGKEKEKEREKEKEKEKEQRG) show a composition bias toward basic and acidic residues. A disordered region spans residues 1–43 (MTQAEREQENGKEKEKEREKEKEKEKEQRGIKRPIAPPVIPEP). Position 288–291 (288–291 (DVGD)) interacts with ATP. Disordered regions lie at residues 410–429 (MTSLQHRSQGDPEDPHDEHY) and 434–494 (QSKQ…GGAE). A compositionally biased stretch (low complexity) spans 434 to 443 (QSKQDQSSKA).

This sequence belongs to the actin family. ARP8 subfamily. Component of the chromatin remodeling INO80 complex; specifically part of a complex module associated with the DBINO domain of INO80. Exists as monomers and dimers, but the dimer is most probably the biologically relevant form required for stable interactions with histones that exploits the twofold symmetry of the nucleosome core.

It localises to the nucleus. Its subcellular location is the chromosome. Functionally, plays an important role in the functional organization of mitotic chromosomes. Exhibits low basal ATPase activity, and unable to polymerize. Its function is as follows. Proposed core component of the chromatin remodeling INO80 complex which is involved in transcriptional regulation, DNA replication and probably DNA repair. Required for the recruitment of INO80 (and probably the INO80 complex) to sites of DNA damage Strongly prefer nucleosomes and H3-H4 tetramers over H2A-H2B dimers, suggesting it may act as a nucleosome recognition module within the complex. This chain is Actin-related protein 8 (actr8), found in Salmo salar (Atlantic salmon).